Reading from the N-terminus, the 327-residue chain is Phenylalanine--tRNA ligase alpha subunit (327 aa).

A Mg(2+)-binding site is contributed by Glu-252.

The protein belongs to the class-II aminoacyl-tRNA synthetase family. Phe-tRNA synthetase alpha subunit type 1 subfamily. In terms of assembly, tetramer of two alpha and two beta subunits. Requires Mg(2+) as cofactor.

It is found in the cytoplasm. It catalyses the reaction tRNA(Phe) + L-phenylalanine + ATP = L-phenylalanyl-tRNA(Phe) + AMP + diphosphate + H(+). The polypeptide is Phenylalanine--tRNA ligase alpha subunit (Yersinia pestis bv. Antiqua (strain Angola)).